Here is a 470-residue protein sequence, read N- to C-terminus: Probable citrate synthase, mitochondrial (470 aa).

Catalysis depends on residues H297, H351, and D406.

Belongs to the citrate synthase family. In terms of assembly, homodimer.

The protein localises to the mitochondrion matrix. The enzyme catalyses oxaloacetate + acetyl-CoA + H2O = citrate + CoA + H(+). Its pathway is carbohydrate metabolism; tricarboxylic acid cycle; isocitrate from oxaloacetate: step 1/2. This chain is Probable citrate synthase, mitochondrial, found in Leishmania major.